Reading from the N-terminus, the 201-residue chain is Phospholipase A2 inhibitor NAI (201 aa).

An N-terminal signal peptide occupies residues 1–19 (MKSLQIICLLFVLVARGSC). 8 disulfide bridges follow: Cys22–Cys47, Cys25–Cys32, Cys40–Cys68, Cys74–Cys95, Cys96–Cys101, Cys119–Cys144, Cys137–Cys166, and Cys170–Cys191. Asn176 carries N-linked (GlcNAc...) asparagine glycosylation.

This sequence belongs to the CNF-like-inhibitor family. As to quaternary structure, heterotrimer of 2 subunits A and 1 subunit B; non-covalently linked. Post-translationally, N-glycosylated, probably by biantennary structure. Glycosylation does not change PLA2 inhibitory activity. In terms of tissue distribution, expressed by the liver.

Its subcellular location is the secreted. Functionally, inhibits the enzymatic activity of all phospholipase A2 tested, binding them with micromole to nanomole affinity. The chain is Phospholipase A2 inhibitor NAI from Notechis ater (Black tiger snake).